Consider the following 67-residue polypeptide: Conotoxin Cl14c (67 aa).

An N-terminal signal peptide occupies residues 1 to 20 (MNVTVMFLVLLLLTMPLTDG). Positions 21-48 (FNIRATNGGELFGPVQRDAGNVLDHGFQ) are excised as a propeptide.

The protein belongs to the conotoxin L superfamily. Contains 2 disulfide bonds. As to expression, expressed by the venom duct.

The protein localises to the secreted. The chain is Conotoxin Cl14c from Californiconus californicus (California cone).